Here is a 263-residue protein sequence, read N- to C-terminus: MNKQAATEKLVAVDIGNTSVNIGIFEGEQLLANWHLGSVAQRMADEYASLLLGLLQHADIQAGELNRVIMCSVVPPLTTTFEEVFKTYFKATPLVVGAGIKSGVKIRMDNPREVGADRIVNAAAARVLYPGACIIVDMGTATTFDTLSESGEYIGGAIAPGIATSAQAIVEKTSKLPKIEIIHPAKAIGSNTVSAMQSGVYFGYIGLVEELVRRIQAELGQKARVVATGGYASLIAEGSRIFDIVRPDLTLQGLRFIYQMNKV.

14 to 21 (DIGNTSVN) contacts ATP. 115–118 (GADR) is a binding site for substrate. The active-site Proton acceptor is the aspartate 117. K(+) is bound at residue aspartate 137. ATP is bound at residue threonine 140. Position 192 (threonine 192) interacts with substrate.

Belongs to the type III pantothenate kinase family. As to quaternary structure, homodimer. It depends on NH4(+) as a cofactor. Requires K(+) as cofactor.

The protein resides in the cytoplasm. The catalysed reaction is (R)-pantothenate + ATP = (R)-4'-phosphopantothenate + ADP + H(+). The protein operates within cofactor biosynthesis; coenzyme A biosynthesis; CoA from (R)-pantothenate: step 1/5. In terms of biological role, catalyzes the phosphorylation of pantothenate (Pan), the first step in CoA biosynthesis. In Dehalococcoides mccartyi (strain CBDB1), this protein is Type III pantothenate kinase.